Here is a 328-residue protein sequence, read N- to C-terminus: Ferredoxin--NADP reductase 2 (328 aa).

The FAD site is built by Glu-37, Gln-45, Tyr-50, Val-90, Phe-124, Asp-285, and Thr-325.

It belongs to the ferredoxin--NADP reductase type 2 family. Homodimer. The cofactor is FAD.

It carries out the reaction 2 reduced [2Fe-2S]-[ferredoxin] + NADP(+) + H(+) = 2 oxidized [2Fe-2S]-[ferredoxin] + NADPH. The protein is Ferredoxin--NADP reductase 2 of Latilactobacillus sakei subsp. sakei (strain 23K) (Lactobacillus sakei subsp. sakei).